The primary structure comprises 939 residues: Collagen-like protein 3 (939 aa).

Residues N15, N35, N39, and N82 are each glycosylated (N-linked (GlcNAc...) asparagine; by host). A compositionally biased stretch (low complexity) spans 84-95; that stretch reads SGSSGPSGPQGP. 2 disordered regions span residues 84-332 and 358-697; these read SGSS…DLGN and SIKG…KGEA. Collagen-like domains follow at residues 88–147, 148–207, 211–330, 364–423, 427–486, 493–552, 564–622, and 638–697; these read GPSG…NGDK, GNKG…KGDK, GNKG…SPDL, GDKG…SGAD, GDKG…KGEK, GESG…KGSK, GDKG…KGDV, and GDKG…KGEA. Composition is skewed to basic and acidic residues over residues 96–110, 123–182, 189–230, 237–260, 267–288, 297–314, 360–371, 378–416, 423–491, 498–527, 537–552, 560–580, and 589–684; these read KGEK…DKGE, DADK…DPGI, DADK…DIGL, DADK…DIGP, DADK…KGTK, KGDK…DKGE, KGDKGDKGDTGL, DADK…DTGL, DADK…DVGI, DADK…DTGI, KGDK…KGSK, KGDK…DIGI, and KGDK…DKGD. N-linked (GlcNAc...) asparagine; by host glycosylation is found at N788, N820, N858, N919, and N925. The disordered stretch occupies residues 896 to 923; it reads NGETGAPTTDSGTNYGAGGGGGGNGTQG. Over residues 910 to 923 the composition is skewed to gly residues; that stretch reads YGAGGGGGGNGTQG.

Post-translationally, may be hydroxylated on lysine by the viral-encoded procollagen-lysine,2-oxoglutarate 5-dioxygenase.

Its subcellular location is the virion. May participate in the formation of a layer of cross-linked glycosylated fibrils at the viral surface thus giving it a hairy-like appearance. This Acanthamoeba polyphaga (Amoeba) protein is Collagen-like protein 3.